The sequence spans 1599 residues: Protein TOPAZ1 (1599 aa).

Disordered stretches follow at residues 1–42, 159–185, 802–836, and 867–889; these read MVAQ…KESL, GCMHVPENSSKSKKENPRSLIDKTDPS, PNVAEEHQSADSKHMELPEKKEPSDHLRELPVPDP, and VTHETSSNEKPGGLSEQTKSSDL. Composition is skewed to basic and acidic residues over residues 168-183 and 805-832; these read SKSKKENPRSLIDKTD and AEEHQSADSKHMELPEKKEPSDHLRELP. Residues 874-884 show a composition bias toward polar residues; that stretch reads NEKPGGLSEQT.

As to expression, expressed in both adult testis and fetal ovary, mostly in germ cells (at protein level).

It is found in the cytoplasm. The protein resides in the cytosol. In terms of biological role, important for normal spermatogenesis and male fertility. Specifically required for progression to the post-meiotic stages of spermatocyte development. Seems to be necessary for normal expression levels of a number of testis-expressed gene transcripts, although its role in this process is unclear. This chain is Protein TOPAZ1 (TOPAZ1), found in Ovis aries (Sheep).